A 437-amino-acid chain; its full sequence is Transcription factor ets-4 (437 aa).

A disordered region spans residues 1-30 (MNGTGSVGHRWNSLSPEPHSGTESTASTPF). Residues 21-30 (GTESTASTPF) show a composition bias toward polar residues. Lysine 32 participates in a covalent cross-link: Glycyl lysine isopeptide (Lys-Gly) (interchain with G-Cter in SUMO). A Phosphoserine modification is found at serine 73. Lysine 83 is covalently cross-linked (Glycyl lysine isopeptide (Lys-Gly) (interchain with G-Cter in SUMO)). The PNT domain maps to 120 to 202 (HLIQDISTTC…AQLQVWKTGT (83 aa)). The disordered stretch occupies residues 275-302 (QGTVLPSPSNSDTSSNGSSQDMNDDDID). The segment covering 280–293 (PSPSNSDTSSNGSS) has biased composition (low complexity). The ETS DNA-binding region spans 349-432 (VHLWQFIREL…KKQRLVYKFL (84 aa)).

It belongs to the ETS family. In terms of assembly, may interact with cebp-1. May interact with tdpt-1 to facilitate its sumoylation. In terms of processing, phosphorylation is required for axon regeneration. Sumoylated; sumoylation inhibits phosphorylation, which is required for probable interaction with cebp-1 and consequently the expression of svh-2. Expressed in cells of the anterior and posterior bulbs of the pharynx, seam cells, a few unidentified cells of the vulva, the hypodermis, several unidentified neurons, labial socket cells of the head and rectal cells.

The protein localises to the nucleus. In terms of biological role, transcription factor which binds to 5'-GGAA/T-3' DNA consensus sequences. Both positively and negatively regulates the expression of target genes. Plays a role in the regulation of adult lifespan, which may in part be through modulation of daf-16 activity. Regulates the expression of genes such as svh-2 in response to axon injury and in addition, may function downstream of the cAMP signaling pathway to promote axon regeneration. Regulates the expression of lipid metabolism genes and may also control the expression of the RNA-binding protein rege-1 which too has been implicated in the control of fat accumulation. The chain is Transcription factor ets-4 from Caenorhabditis elegans.